The chain runs to 440 residues: Nuclear hormone receptor family member nhr-130 (440 aa).

Positions 34-110 (LYTCQVCALP…VGMDPGRFQF (77 aa)) form a DNA-binding region, nuclear receptor. 2 NR C4-type zinc fingers span residues 37 to 57 (CQVC…CRAC) and 74 to 93 (CKKQ…CKKC). One can recognise an NR LBD domain in the interval 184–439 (EKPLIARNNL…FSHPEMFEDT (256 aa)).

It belongs to the nuclear hormone receptor family.

It localises to the nucleus. In terms of biological role, orphan nuclear receptor. The polypeptide is Nuclear hormone receptor family member nhr-130 (nhr-130) (Caenorhabditis elegans).